We begin with the raw amino-acid sequence, 762 residues long: Mitochondrial intermediate peptidase (762 aa).

The transit peptide at 1–28 (MQVRTLLTLGKKKVIGNRQCILSLYRKY) directs the protein to the mitochondrion. H544 serves as a coordination point for Zn(2+). The active site involves E545. H548 and H551 together coordinate Zn(2+).

The protein belongs to the peptidase M3 family. The cofactor is Zn(2+).

The protein localises to the mitochondrion matrix. It carries out the reaction Release of an N-terminal octapeptide as second stage of processing of some proteins imported into the mitochondrion.. In terms of biological role, cleaves proteins, imported into the mitochondrion, to their mature size. While most mitochondrial precursor proteins are processed to the mature form in one step by mitochondrial processing peptidase (MPP), the sequential cleavage by MIP of an octapeptide after initial processing by MPP is a required step for a subgroup of nuclear-encoded precursor proteins destined for the matrix or the inner membrane. This is Mitochondrial intermediate peptidase (oct1) from Schizosaccharomyces pombe (strain 972 / ATCC 24843) (Fission yeast).